We begin with the raw amino-acid sequence, 260 residues long: Neuraminyllactose-binding hemagglutinin (260 aa).

The N-terminal stretch at 1–27 (MKTNGHFKDFAWKKCLLGASVGALLVG) is a signal peptide. Residue C28 is the site of N-palmitoyl cysteine attachment. C28 carries the S-diacylglycerol cysteine lipid modification. Residues 134 to 139 (KRTIQK) are N-acetyl-neuraminyl-alpha(2,3)-lactose binding motif.

Its subcellular location is the cell outer membrane. The chain is Neuraminyllactose-binding hemagglutinin (hpaA) from Helicobacter pylori (Campylobacter pylori).